Here is a 459-residue protein sequence, read N- to C-terminus: Plasma alpha-L-fucosidase (459 aa).

Residues 1–23 (MRLGLLMFLPLLLLATRYRAVTA) form the signal peptide. N-linked (GlcNAc...) asparagine glycans are attached at residues asparagine 163 and asparagine 231. Serine 293 carries the post-translational modification Phosphoserine. An N-linked (GlcNAc...) asparagine glycan is attached at asparagine 369.

Belongs to the glycosyl hydrolase 29 family. As to quaternary structure, homotetramer.

The protein localises to the secreted. It catalyses the reaction an alpha-L-fucoside + H2O = L-fucose + an alcohol. Alpha-L-fucosidase is responsible for hydrolyzing the alpha-1,6-linked fucose joined to the reducing-end N-acetylglucosamine of the carbohydrate moieties of glycoproteins. In Rattus norvegicus (Rat), this protein is Plasma alpha-L-fucosidase (Fuca2).